The chain runs to 1216 residues: FK506-binding protein 15 (1216 aa).

Met-1 carries the post-translational modification N-acetylmethionine. Residues Ser-14 and Ser-23 each carry the phosphoserine modification. The tract at residues 41–68 is disordered; it reads YTAPKQPKKGQGTAAGNQTAPKPAPATT. Over residues 59–68 the composition is skewed to low complexity; the sequence is TAPKPAPATT. Residues 71–168 form an important for function in growth cone organization region; sequence SSVLFATAVH…AVSFNKQVCV (98 aa). Lys-91 is subject to N6-acetyllysine. The region spanning 196–289 is the PPIase FKBP-type domain; the sequence is GDSLEVAYTG…VFEVEVRRVK (94 aa). The tract at residues 292-357 is disordered; the sequence is RDSGSDGHSV…QLTVNSNPDT (66 aa). Residues 303–322 show a composition bias toward low complexity; sequence SRDSAAPSPIPASDSLSADP. Ser-306, Ser-310, Ser-342, Ser-344, and Ser-617 each carry phosphoserine. Residues 340-356 show a composition bias toward polar residues; sequence SKSNSLSEQLTVNSNPD. Coiled coils occupy residues 519–790 and 820–865; these read MAVN…AAAE and QQYR…RLEK. The interval 927–1216 is disordered; sequence HQEEEEEEEE…DDDDDIGWLG (290 aa). Residues 929–940 show a composition bias toward acidic residues; the sequence is EEEEEEEEEEEE. Residue Ser-948 is modified to Phosphoserine. The span at 954 to 964 shows a compositional bias: pro residues; it reads PATPGMPPAPP. The span at 983 to 994 shows a compositional bias: low complexity; sequence TTPLPLQALPTP. Ser-1018 carries the phosphoserine modification. The span at 1036 to 1045 shows a compositional bias: pro residues; that stretch reads TSIPPKPPGP. Phosphoserine occurs at positions 1050 and 1091. Thr-1093 bears the Phosphothreonine mark. 5 positions are modified to phosphoserine: Ser-1108, Ser-1153, Ser-1157, Ser-1159, and Ser-1190. Phosphothreonine is present on Thr-1198. Acidic residues predominate over residues 1202–1216; that stretch reads GDDDDDDDDDIGWLG.

The protein belongs to the FKBP-type PPIase family. As to quaternary structure, interacts with WIP and actin. Interacts with TBC1D23. In terms of tissue distribution, expressed in brain, with highest levels in the granular cell layer of cerebellum and in the granule cell layer of dentate gyrus.

It localises to the cytoplasm. The protein localises to the cell projection. It is found in the axon. Its subcellular location is the early endosome. Its function is as follows. Involved in the transport of early endosomes at the level of transition between microfilament-based and microtubule-based movement. May be involved in the cytoskeletal organization of neuronal growth cones. Seems to be inactive as a PPIase. In Mus musculus (Mouse), this protein is FK506-binding protein 15 (Fkbp15).